The sequence spans 303 residues: Glycine--tRNA ligase alpha subunit (303 aa).

Belongs to the class-II aminoacyl-tRNA synthetase family. As to quaternary structure, tetramer of two alpha and two beta subunits.

It localises to the cytoplasm. The enzyme catalyses tRNA(Gly) + glycine + ATP = glycyl-tRNA(Gly) + AMP + diphosphate. The polypeptide is Glycine--tRNA ligase alpha subunit (Bordetella pertussis (strain Tohama I / ATCC BAA-589 / NCTC 13251)).